The chain runs to 356 residues: GTPase Obg (356 aa).

One can recognise an Obg domain in the interval 1 to 158 (MFIDSVKITL…RLVRLELKLI (158 aa)). One can recognise an OBG-type G domain in the interval 159-339 (ADVGLVGFPN…LKFMLLEEIK (181 aa)). Residues 165-172 (GFPNVGKS), 190-194 (FTTLT), 212-215 (DIPG), 280-283 (SKSD), and 320-322 (SSL) each bind GTP. Mg(2+)-binding residues include serine 172 and threonine 192.

It belongs to the TRAFAC class OBG-HflX-like GTPase superfamily. OBG GTPase family. Monomer. Mg(2+) serves as cofactor.

The protein localises to the cytoplasm. Functionally, an essential GTPase which binds GTP, GDP and possibly (p)ppGpp with moderate affinity, with high nucleotide exchange rates and a fairly low GTP hydrolysis rate. Plays a role in control of the cell cycle, stress response, ribosome biogenesis and in those bacteria that undergo differentiation, in morphogenesis control. The polypeptide is GTPase Obg (Campylobacter jejuni subsp. jejuni serotype O:23/36 (strain 81-176)).